We begin with the raw amino-acid sequence, 680 residues long: tRNA 5-methylaminomethyl-2-thiouridine biosynthesis bifunctional protein MnmC (680 aa).

The segment at 1-251 (MSQNHILPQN…KREMIAGTLT (251 aa)) is tRNA (mnm(5)s(2)U34)-methyltransferase. The tract at residues 277 to 680 (IGGGVASAAL…RLLKGKPLDI (404 aa)) is FAD-dependent cmnm(5)s(2)U34 oxidoreductase.

This sequence in the N-terminal section; belongs to the methyltransferase superfamily. tRNA (mnm(5)s(2)U34)-methyltransferase family. The protein in the C-terminal section; belongs to the DAO family. FAD is required as a cofactor.

It is found in the cytoplasm. It carries out the reaction 5-aminomethyl-2-thiouridine(34) in tRNA + S-adenosyl-L-methionine = 5-methylaminomethyl-2-thiouridine(34) in tRNA + S-adenosyl-L-homocysteine + H(+). Functionally, catalyzes the last two steps in the biosynthesis of 5-methylaminomethyl-2-thiouridine (mnm(5)s(2)U) at the wobble position (U34) in tRNA. Catalyzes the FAD-dependent demodification of cmnm(5)s(2)U34 to nm(5)s(2)U34, followed by the transfer of a methyl group from S-adenosyl-L-methionine to nm(5)s(2)U34, to form mnm(5)s(2)U34. This chain is tRNA 5-methylaminomethyl-2-thiouridine biosynthesis bifunctional protein MnmC, found in Aliivibrio fischeri (strain ATCC 700601 / ES114) (Vibrio fischeri).